A 305-amino-acid polypeptide reads, in one-letter code: UDP-3-O-acyl-N-acetylglucosamine deacetylase (305 aa).

Zn(2+) contacts are provided by His-79, His-238, and Asp-242. His-265 functions as the Proton donor in the catalytic mechanism.

The protein belongs to the LpxC family. Zn(2+) is required as a cofactor.

It carries out the reaction a UDP-3-O-[(3R)-3-hydroxyacyl]-N-acetyl-alpha-D-glucosamine + H2O = a UDP-3-O-[(3R)-3-hydroxyacyl]-alpha-D-glucosamine + acetate. It functions in the pathway glycolipid biosynthesis; lipid IV(A) biosynthesis; lipid IV(A) from (3R)-3-hydroxytetradecanoyl-[acyl-carrier-protein] and UDP-N-acetyl-alpha-D-glucosamine: step 2/6. In terms of biological role, catalyzes the hydrolysis of UDP-3-O-myristoyl-N-acetylglucosamine to form UDP-3-O-myristoylglucosamine and acetate, the committed step in lipid A biosynthesis. This Vibrio atlanticus (strain LGP32) (Vibrio splendidus (strain Mel32)) protein is UDP-3-O-acyl-N-acetylglucosamine deacetylase.